Reading from the N-terminus, the 262-residue chain is Type III pantothenate kinase (262 aa).

Residue 9–16 (DAGNSRIK) participates in ATP binding. Substrate-binding positions include Tyr-96 and 103-106 (GSDR). Asp-105 acts as the Proton acceptor in catalysis. Residue Thr-129 coordinates ATP. Residue Thr-189 participates in substrate binding.

The protein belongs to the type III pantothenate kinase family. In terms of assembly, homodimer. It depends on NH4(+) as a cofactor. K(+) serves as cofactor.

It is found in the cytoplasm. The enzyme catalyses (R)-pantothenate + ATP = (R)-4'-phosphopantothenate + ADP + H(+). Its pathway is cofactor biosynthesis; coenzyme A biosynthesis; CoA from (R)-pantothenate: step 1/5. In terms of biological role, catalyzes the phosphorylation of pantothenate (Pan), the first step in CoA biosynthesis. The protein is Type III pantothenate kinase of Burkholderia ambifaria (strain MC40-6).